The chain runs to 93 residues: MAELARAHILVSGEVQGVSFRAAAVDEARRLGVRGWVRNVADGRVEAEAEGERAKVEALVRWCGRGPPAARVADVQVSWGAYGGDLGPFSVRH.

An Acylphosphatase-like domain is found at R6–H93. Catalysis depends on residues R21 and N39.

The protein belongs to the acylphosphatase family.

The enzyme catalyses an acyl phosphate + H2O = a carboxylate + phosphate + H(+). This chain is Acylphosphatase (acyP), found in Anaeromyxobacter sp. (strain Fw109-5).